A 715-amino-acid polypeptide reads, in one-letter code: Mitochondrial division protein 1 (715 aa).

Positions 122 to 147 (AAATSGKLVTEKGEKGKKKRAETAHA) are disordered. Residues 228–268 (IKNLKGAVQTITDNLDLLEIQKNLAASEIRELDLKMEKLKL) adopt a coiled-coil conformation. Residues 313-380 (EKAYEEATSA…HKNHEKKVQQ (68 aa)) are disordered. Positions 347–358 (QEPQVNLASAQK) are enriched in polar residues. The segment covering 359 to 375 (SLKKRSKQTGYSHKNHE) has biased composition (basic residues). WD repeat units lie at residues 409–449 (AHED…HVAS), 452–490 (GHLA…DNDS), 503–542 (SHID…QTLD), 564–604 (NNDH…RTLE), 605–644 (GHSD…DTFS), 646–681 (EHPV…HWFC), and 685–715 (EHSE…AWAI).

This sequence belongs to the WD repeat MDV1/CAF4 family.

It localises to the mitochondrion outer membrane. Involved in mitochondrial fission. Acts as an adapter protein required to form mitochondrial fission complexes. Formation of these complexes is required to promote constriction and fission of the mitochondrial compartment at a late step in mitochondrial division. The chain is Mitochondrial division protein 1 (MDV1) from Eremothecium gossypii (strain ATCC 10895 / CBS 109.51 / FGSC 9923 / NRRL Y-1056) (Yeast).